A 236-amino-acid polypeptide reads, in one-letter code: Glucosamine-6-phosphate deaminase (236 aa).

Asp-67 serves as the catalytic Proton acceptor; for enolization step. Asn-136 acts as the For ring-opening step in catalysis. Catalysis depends on His-138, which acts as the Proton acceptor; for ring-opening step. The For ring-opening step role is filled by Glu-143.

Belongs to the glucosamine/galactosamine-6-phosphate isomerase family. NagB subfamily.

The catalysed reaction is alpha-D-glucosamine 6-phosphate + H2O = beta-D-fructose 6-phosphate + NH4(+). It participates in amino-sugar metabolism; N-acetylneuraminate degradation; D-fructose 6-phosphate from N-acetylneuraminate: step 5/5. Its function is as follows. Catalyzes the reversible isomerization-deamination of glucosamine 6-phosphate (GlcN6P) to form fructose 6-phosphate (Fru6P) and ammonium ion. The sequence is that of Glucosamine-6-phosphate deaminase from Lachnoclostridium phytofermentans (strain ATCC 700394 / DSM 18823 / ISDg) (Clostridium phytofermentans).